We begin with the raw amino-acid sequence, 618 residues long: Dihydroxy-acid dehydratase (618 aa).

Aspartate 81 provides a ligand contact to Mg(2+). Cysteine 122 serves as a coordination point for [2Fe-2S] cluster. Residues aspartate 123 and lysine 124 each coordinate Mg(2+). At lysine 124 the chain carries N6-carboxylysine. Cysteine 195 is a [2Fe-2S] cluster binding site. Mg(2+) is bound at residue glutamate 491. Serine 517 acts as the Proton acceptor in catalysis.

The protein belongs to the IlvD/Edd family. As to quaternary structure, homodimer. [2Fe-2S] cluster serves as cofactor. Requires Mg(2+) as cofactor.

It carries out the reaction (2R)-2,3-dihydroxy-3-methylbutanoate = 3-methyl-2-oxobutanoate + H2O. The enzyme catalyses (2R,3R)-2,3-dihydroxy-3-methylpentanoate = (S)-3-methyl-2-oxopentanoate + H2O. Its pathway is amino-acid biosynthesis; L-isoleucine biosynthesis; L-isoleucine from 2-oxobutanoate: step 3/4. It functions in the pathway amino-acid biosynthesis; L-valine biosynthesis; L-valine from pyruvate: step 3/4. Its function is as follows. Functions in the biosynthesis of branched-chain amino acids. Catalyzes the dehydration of (2R,3R)-2,3-dihydroxy-3-methylpentanoate (2,3-dihydroxy-3-methylvalerate) into 2-oxo-3-methylpentanoate (2-oxo-3-methylvalerate) and of (2R)-2,3-dihydroxy-3-methylbutanoate (2,3-dihydroxyisovalerate) into 2-oxo-3-methylbutanoate (2-oxoisovalerate), the penultimate precursor to L-isoleucine and L-valine, respectively. This Rhodopseudomonas palustris (strain ATCC BAA-98 / CGA009) protein is Dihydroxy-acid dehydratase.